The sequence spans 328 residues: GMP reductase (328 aa).

Cys-176 (thioimidate intermediate) is an active-site residue. Ile-205 to Val-228 serves as a coordination point for NADP(+).

This sequence belongs to the IMPDH/GMPR family. GuaC type 2 subfamily.

The enzyme catalyses IMP + NH4(+) + NADP(+) = GMP + NADPH + 2 H(+). In terms of biological role, catalyzes the irreversible NADPH-dependent deamination of GMP to IMP. It functions in the conversion of nucleobase, nucleoside and nucleotide derivatives of G to A nucleotides, and in maintaining the intracellular balance of A and G nucleotides. This Bacillus cereus (strain ATCC 14579 / DSM 31 / CCUG 7414 / JCM 2152 / NBRC 15305 / NCIMB 9373 / NCTC 2599 / NRRL B-3711) protein is GMP reductase.